The primary structure comprises 380 residues: tRNA(Met) cytidine acetate ligase (380 aa).

ATP-binding positions include 7–20 (ITEYNPFHNGHLYH), glycine 100, asparagine 153, and arginine 178.

It belongs to the TmcAL family.

The protein resides in the cytoplasm. The enzyme catalyses cytidine(34) in elongator tRNA(Met) + acetate + ATP = N(4)-acetylcytidine(34) in elongator tRNA(Met) + AMP + diphosphate. Functionally, catalyzes the formation of N(4)-acetylcytidine (ac(4)C) at the wobble position of elongator tRNA(Met), using acetate and ATP as substrates. First activates an acetate ion to form acetyladenylate (Ac-AMP) and then transfers the acetyl group to tRNA to form ac(4)C34. The sequence is that of tRNA(Met) cytidine acetate ligase from Staphylococcus haemolyticus (strain JCSC1435).